The chain runs to 192 residues: Large ribosomal subunit protein uL3 (192 aa).

It belongs to the universal ribosomal protein uL3 family. In terms of assembly, part of the 50S ribosomal subunit. Forms a cluster with proteins L14 and L19.

In terms of biological role, one of the primary rRNA binding proteins, it binds directly near the 3'-end of the 23S rRNA, where it nucleates assembly of the 50S subunit. This Wolinella succinogenes (strain ATCC 29543 / DSM 1740 / CCUG 13145 / JCM 31913 / LMG 7466 / NCTC 11488 / FDC 602W) (Vibrio succinogenes) protein is Large ribosomal subunit protein uL3 (rplC).